The chain runs to 81 residues: Large ribosomal subunit protein bL31B (81 aa).

Belongs to the bacterial ribosomal protein bL31 family. Type B subfamily. As to quaternary structure, part of the 50S ribosomal subunit.

In Lactiplantibacillus plantarum (strain ATCC BAA-793 / NCIMB 8826 / WCFS1) (Lactobacillus plantarum), this protein is Large ribosomal subunit protein bL31B (rpmE2).